The following is a 152-amino-acid chain: SsrA-binding protein (152 aa).

It belongs to the SmpB family.

The protein localises to the cytoplasm. Functionally, required for rescue of stalled ribosomes mediated by trans-translation. Binds to transfer-messenger RNA (tmRNA), required for stable association of tmRNA with ribosomes. tmRNA and SmpB together mimic tRNA shape, replacing the anticodon stem-loop with SmpB. tmRNA is encoded by the ssrA gene; the 2 termini fold to resemble tRNA(Ala) and it encodes a 'tag peptide', a short internal open reading frame. During trans-translation Ala-aminoacylated tmRNA acts like a tRNA, entering the A-site of stalled ribosomes, displacing the stalled mRNA. The ribosome then switches to translate the ORF on the tmRNA; the nascent peptide is terminated with the 'tag peptide' encoded by the tmRNA and targeted for degradation. The ribosome is freed to recommence translation, which seems to be the essential function of trans-translation. This is SsrA-binding protein from Rickettsia massiliae (strain Mtu5).